Reading from the N-terminus, the 188-residue chain is Ion-translocating oxidoreductase complex subunit B (188 aa).

The hydrophobic stretch occupies residues 1 to 26 (MMSLWIAIGALSTLALVSGVVLGFAA). The region spanning 32 to 91 (DEDPVVEQVDAILPQSQCGQCGYPGCRPYAEAVSTGGEKINKCAPGGEQVMLKLAELLAV) is the 4Fe-4S domain. [4Fe-4S] cluster-binding residues include Cys49, Cys52, Cys57, Cys74, Cys117, Cys120, Cys123, Cys127, Cys147, Cys150, Cys153, and Cys157. 4Fe-4S ferredoxin-type domains lie at 108 to 137 (KVAFIDEANCIGCTKCIQACPVDAIIGATR) and 138 to 167 (AMHTVLSDLCTGCDLCVAPCPTDCIEMIPV).

It belongs to the 4Fe4S bacterial-type ferredoxin family. RnfB subfamily. In terms of assembly, the complex is composed of six subunits: RnfA, RnfB, RnfC, RnfD, RnfE and RnfG. [4Fe-4S] cluster serves as cofactor.

Its subcellular location is the cell inner membrane. Functionally, part of a membrane-bound complex that couples electron transfer with translocation of ions across the membrane. This chain is Ion-translocating oxidoreductase complex subunit B, found in Yersinia pestis bv. Antiqua (strain Antiqua).